Here is a 428-residue protein sequence, read N- to C-terminus: Adenosylmethionine-8-amino-7-oxononanoate aminotransferase (428 aa).

A substrate-binding site is contributed by Trp52. Pyridoxal 5'-phosphate is bound at residue 112 to 113; that stretch reads GS. Tyr144 is a binding site for substrate. Pyridoxal 5'-phosphate is bound at residue Asp245. 2 residues coordinate substrate: Lys274 and Gly307. Lys274 bears the N6-(pyridoxal phosphate)lysine mark. 308–309 serves as a coordination point for pyridoxal 5'-phosphate; the sequence is PT. Arg391 is a substrate binding site.

It belongs to the class-III pyridoxal-phosphate-dependent aminotransferase family. BioA subfamily. Homodimer. Pyridoxal 5'-phosphate serves as cofactor.

It is found in the cytoplasm. The catalysed reaction is (8S)-8-amino-7-oxononanoate + S-adenosyl-L-methionine = S-adenosyl-4-methylsulfanyl-2-oxobutanoate + (7R,8S)-7,8-diammoniononanoate. It participates in cofactor biosynthesis; biotin biosynthesis; 7,8-diaminononanoate from 8-amino-7-oxononanoate (SAM route): step 1/1. Its function is as follows. Catalyzes the transfer of the alpha-amino group from S-adenosyl-L-methionine (SAM) to 7-keto-8-aminopelargonic acid (KAPA) to form 7,8-diaminopelargonic acid (DAPA). It is the only aminotransferase known to utilize SAM as an amino donor. The protein is Adenosylmethionine-8-amino-7-oxononanoate aminotransferase of Buchnera aphidicola subsp. Acyrthosiphon pisum (strain APS) (Acyrthosiphon pisum symbiotic bacterium).